A 202-amino-acid chain; its full sequence is Matrix protein (202 aa).

The interval 13–32 (DEEIPKPGTPSAPPDDDDLW) is disordered. The short motif at 35-38 (PPEY) is the PPXY motif element.

It belongs to the lyssavirus matrix protein family. In terms of assembly, homomultimer. Interacts with nucleoprotein and with the cytoplasmic domain of glycoprotein.

It localises to the virion membrane. It is found in the host endomembrane system. Plays a major role in assembly and budding of virion. Completely covers the ribonucleoprotein coil and keep it in condensed bullet-shaped form. Inhibits viral transcription and stimulates replication. Plays a major role in early induction of TRAIL-mediated apoptosis in infected neurons. This is Matrix protein (M) from Lagos bat virus (LBV).